The primary structure comprises 425 residues: Enolase (425 aa).

The interval 31 to 54 is disordered; it reads TGSAIVPSGASTGEKEAVELRDSD. Basic and acidic residues predominate over residues 43–54; the sequence is GEKEAVELRDSD. Q162 provides a ligand contact to (2R)-2-phosphoglycerate. E204 functions as the Proton donor in the catalytic mechanism. Mg(2+) contacts are provided by D241, E285, and D312. Residues K337, R366, S367, and K388 each coordinate (2R)-2-phosphoglycerate. K337 serves as the catalytic Proton acceptor.

It belongs to the enolase family. Mg(2+) is required as a cofactor.

It localises to the cytoplasm. The protein resides in the secreted. The protein localises to the cell surface. It catalyses the reaction (2R)-2-phosphoglycerate = phosphoenolpyruvate + H2O. Its pathway is carbohydrate degradation; glycolysis; pyruvate from D-glyceraldehyde 3-phosphate: step 4/5. In terms of biological role, catalyzes the reversible conversion of 2-phosphoglycerate (2-PG) into phosphoenolpyruvate (PEP). It is essential for the degradation of carbohydrates via glycolysis. The protein is Enolase of Gloeobacter violaceus (strain ATCC 29082 / PCC 7421).